The sequence spans 56 residues: Small ribosomal subunit protein uS14A (56 aa).

The Zn(2+) site is built by Cys-21 and Cys-24. Residue Ser-25 is modified to Phosphoserine. Positions 39 and 42 each coordinate Zn(2+).

Belongs to the universal ribosomal protein uS14 family. Component of the small ribosomal subunit (SSU). Mature yeast ribosomes consist of a small (40S) and a large (60S) subunit. The 40S small subunit contains 1 molecule of ribosomal RNA (18S rRNA) and 33 different proteins (encoded by 57 genes). The large 60S subunit contains 3 rRNA molecules (25S, 5.8S and 5S rRNA) and 46 different proteins (encoded by 81 genes). Zn(2+) is required as a cofactor.

It is found in the cytoplasm. Component of the ribosome, a large ribonucleoprotein complex responsible for the synthesis of proteins in the cell. The small ribosomal subunit (SSU) binds messenger RNAs (mRNAs) and translates the encoded message by selecting cognate aminoacyl-transfer RNA (tRNA) molecules. The large subunit (LSU) contains the ribosomal catalytic site termed the peptidyl transferase center (PTC), which catalyzes the formation of peptide bonds, thereby polymerizing the amino acids delivered by tRNAs into a polypeptide chain. The nascent polypeptides leave the ribosome through a tunnel in the LSU and interact with protein factors that function in enzymatic processing, targeting, and the membrane insertion of nascent chains at the exit of the ribosomal tunnel. In Saccharomyces cerevisiae (strain ATCC 204508 / S288c) (Baker's yeast), this protein is Small ribosomal subunit protein uS14A.